The primary structure comprises 247 residues: Type III pantothenate kinase (247 aa).

6-13 (DVGNTSIY) contributes to the ATP binding site. 102–105 (GADL) contacts substrate. D104 (proton acceptor) is an active-site residue. D122 provides a ligand contact to K(+). T125 serves as a coordination point for ATP. Residue T176 coordinates substrate.

This sequence belongs to the type III pantothenate kinase family. In terms of assembly, homodimer. NH4(+) is required as a cofactor. It depends on K(+) as a cofactor.

Its subcellular location is the cytoplasm. It catalyses the reaction (R)-pantothenate + ATP = (R)-4'-phosphopantothenate + ADP + H(+). It functions in the pathway cofactor biosynthesis; coenzyme A biosynthesis; CoA from (R)-pantothenate: step 1/5. Its function is as follows. Catalyzes the phosphorylation of pantothenate (Pan), the first step in CoA biosynthesis. This is Type III pantothenate kinase from Acholeplasma laidlawii (strain PG-8A).